Here is a 712-residue protein sequence, read N- to C-terminus: Polyribonucleotide nucleotidyltransferase (712 aa).

The Mg(2+) site is built by aspartate 487 and aspartate 493. The region spanning 554-613 (PKILTMQINPEKIREVIGPSGKQINKIIDETGVKIDIEQDGTIFISSVNEAMNQKAKQII) is the KH domain. Residues 623–691 (GQIYLGKVKR…KQGRVNLSRK (69 aa)) enclose the S1 motif domain.

The protein belongs to the polyribonucleotide nucleotidyltransferase family. It depends on Mg(2+) as a cofactor.

The protein localises to the cytoplasm. The enzyme catalyses RNA(n+1) + phosphate = RNA(n) + a ribonucleoside 5'-diphosphate. Involved in mRNA degradation. Catalyzes the phosphorolysis of single-stranded polyribonucleotides processively in the 3'- to 5'-direction. This is Polyribonucleotide nucleotidyltransferase from Geobacillus sp. (strain WCH70).